The sequence spans 1149 residues: Probable phospholipid-transporting ATPase IA (1149 aa).

Over 1–65 the chain is Cytoplasmic; that stretch reads MPTMRRTVSE…TAKYNIITFL (65 aa). Ser-25 bears the Phosphoserine mark. Phosphothreonine is present on Thr-28. Ser-29 carries the phosphoserine modification. The helical transmembrane segment at 66-86 threads the bilayer; sequence PRFLYSQFRRAANSFFLFIAL. Residues 87–92 are Extracellular-facing; it reads LQQIPD. Residues 93–115 traverse the membrane as a helical segment; the sequence is VSPTGRYTTLVPLLFILAVAAIK. Residues 116-297 are Cytoplasmic-facing; that stretch reads EIIEDIKRHK…SNVERITNVQ (182 aa). The chain crosses the membrane as a helical span at residues 298-319; the sequence is ILILFCILIAMSLVCSVGSAIW. Residues 320 to 344 are Extracellular-facing; that stretch reads NRRHSGRDWYLNLNYGGANNFGLNF. The chain crosses the membrane as a helical span at residues 345 to 366; it reads LTFIILFNNLIPISLLVTLEVV. The Cytoplasmic portion of the chain corresponds to 367 to 842; the sequence is KFTQAYFINW…GAWNYNRGSK (476 aa). The active-site 4-aspartylphosphate intermediate is the Asp-409. Residues Asp-409, Lys-410, Thr-411, Glu-493, Phe-534, Lys-557, Arg-590, Thr-670, Gly-671, Asp-672, 726 to 733, Arg-760, and Lys-766 contribute to the ATP site; that span reads ALIIDGKT. Asp-409 lines the Mg(2+) pocket. Thr-411 is a Mg(2+) binding site. Asp-786 serves as a coordination point for Mg(2+). 2 residues coordinate ATP: Asn-789 and Asp-790. Asp-790 is a Mg(2+) binding site. Residues 843-863 form a helical membrane-spanning segment; sequence CILYCFYKNIVLYIIEIWFAF. Topologically, residues 864 to 875 are extracellular; the sequence is VNGFSGQILFER. The helical transmembrane segment at 876-895 threads the bilayer; that stretch reads WCIGLYNVMFTAMPPLTLGI. At 896–925 the chain is on the cytoplasmic side; the sequence is FERSCRKEYMLKYPELYKTSQNALDFNTKV. A helical membrane pass occupies residues 926-947; the sequence is FWVHCLNGLFHSVILFWFPLKA. At 948–961 the chain is on the extracellular side; sequence LQYGTVFENGRTSD. A helical transmembrane segment spans residues 962–984; that stretch reads YLLLGNFVYTFVVITVCLKAGLE. The Cytoplasmic segment spans residues 985 to 990; the sequence is TSYWTW. Residues 991–1011 form a helical membrane-spanning segment; the sequence is FSHIAIWGSIALWVVFFGIYS. The Extracellular segment spans residues 1012 to 1029; that stretch reads SLWPAVPMAPDMSGEAAM. A helical transmembrane segment spans residues 1030-1055; that stretch reads LFSSGVFWMGLLFIPVASLLLDVVYK. Residues 1056-1149 lie on the Cytoplasmic side of the membrane; that stretch reads VIKRTAFKTL…DTTKQRPDEW (94 aa). 1080-1087 is a binding site for ATP; sequence GAVVLGKS. Residue Ser-1111 is modified to Phosphoserine.

The protein belongs to the cation transport ATPase (P-type) (TC 3.A.3) family. Type IV subfamily. In terms of assembly, component of a P4-ATPase flippase complex which consists of a catalytic alpha subunit and an accessory beta subunit. Interacts with TMEM30A to form a flippase complex; this complex forms an intermediate phosphoenzyme. Interacts with TMEM30B; this interaction is reported conflictingly. Mg(2+) is required as a cofactor. Post-translationally, cleaved by calpain in a caspase- and calcium influx-dependent manner during platelet apoptosis leading to a 100 kDa polypeptide. In terms of tissue distribution, kidney.

It is found in the cytoplasmic vesicle. Its subcellular location is the secretory vesicle. It localises to the chromaffin granule membrane. The protein resides in the cytoplasmic granule. The protein localises to the cell membrane. It is found in the endoplasmic reticulum. Its subcellular location is the golgi apparatus. The catalysed reaction is ATP + H2O + phospholipidSide 1 = ADP + phosphate + phospholipidSide 2.. It catalyses the reaction a 1,2-diacyl-sn-glycero-3-phospho-L-serine(out) + ATP + H2O = a 1,2-diacyl-sn-glycero-3-phospho-L-serine(in) + ADP + phosphate + H(+). Functionally, catalytic component of a P4-ATPase flippase complex which catalyzes the hydrolysis of ATP coupled to the transport of aminophospholipids from the outer to the inner leaflet of various membranes and ensures the maintenance of asymmetric distribution of phospholipids. Phospholipid translocation also seems to be implicated in vesicle formation and in uptake of lipid signaling molecules. In vitro, its ATPase activity is selectively and stereospecifically stimulated by phosphatidylserine (PS). The flippase complex ATP8A1:TMEM30A seems to play a role in regulation of cell migration probably involving flippase-mediated translocation of phosphatidylethanolamine (PE) at the cell membrane. Acts as aminophospholipid translocase at the cell membrane in neuronal cells. The polypeptide is Probable phospholipid-transporting ATPase IA (Bos taurus (Bovine)).